Reading from the N-terminus, the 243-residue chain is Adenosylcobinamide-GDP ribazoletransferase (243 aa).

A run of 5 helical transmembrane segments spans residues 31 to 51 (LLWYPAVGLLLGLLLWLAHLL), 61 to 81 (AAIILALWVGLSGGLHLDGLA), 109 to 129 (IAVVVLVLLLLLKFAALLSLL), 134 to 154 (GIYLVLLPWLGRSLLPLLLAT), and 188 to 208 (LLLGWGALIALATALALFVWL).

This sequence belongs to the CobS family. Requires Mg(2+) as cofactor.

The protein resides in the cell inner membrane. It catalyses the reaction alpha-ribazole + adenosylcob(III)inamide-GDP = adenosylcob(III)alamin + GMP + H(+). It carries out the reaction alpha-ribazole 5'-phosphate + adenosylcob(III)inamide-GDP = adenosylcob(III)alamin 5'-phosphate + GMP + H(+). It participates in cofactor biosynthesis; adenosylcobalamin biosynthesis; adenosylcobalamin from cob(II)yrinate a,c-diamide: step 7/7. In terms of biological role, joins adenosylcobinamide-GDP and alpha-ribazole to generate adenosylcobalamin (Ado-cobalamin). Also synthesizes adenosylcobalamin 5'-phosphate from adenosylcobinamide-GDP and alpha-ribazole 5'-phosphate. This Ectopseudomonas mendocina (strain ymp) (Pseudomonas mendocina) protein is Adenosylcobinamide-GDP ribazoletransferase.